Consider the following 134-residue polypeptide: MGKDTIADIITSIRNADMNRKGTVRIGSTNITESIVKILLREGFIENVRKHRENNQYFLILTLRHRRNKKESYKTILNLKRISRPGLRIYSNSQRIPRILGGIGIVILSTSRGIMTDREARLKRVGGEILCYIW.

The protein belongs to the universal ribosomal protein uS8 family. As to quaternary structure, part of the 30S ribosomal subunit.

The protein localises to the plastid. It is found in the chloroplast. Its function is as follows. One of the primary rRNA binding proteins, it binds directly to 16S rRNA central domain where it helps coordinate assembly of the platform of the 30S subunit. In Aethionema cordifolium (Lebanon stonecress), this protein is Small ribosomal subunit protein uS8c (rps8).